A 572-amino-acid chain; its full sequence is Probable terpene synthase 13 (572 aa).

Mg(2+) is bound by residues D326, D330, and E478. A DDXXD motif motif is present at residues 326-330 (DDIFD).

Belongs to the terpene synthase family. Mg(2+) serves as cofactor.

Its function is as follows. Probable sesquiterpene synthase. In Ricinus communis (Castor bean), this protein is Probable terpene synthase 13 (TPS13).